We begin with the raw amino-acid sequence, 102 residues long: Protein transport protein sec61 subunit beta (102 aa).

Polar residues predominate over residues 1-15 (MSSTKASGSVKNSAA). The segment at 1–53 (MSSTKASGSVKNSAASAPGGPKSQIRRRAAVEKNTKESNSGPAGARAAGAPGS) is disordered. Topologically, residues 1–72 (MSSTKASGSV…DEASGFKVDP (72 aa)) are cytoplasmic. The segment covering 41–52 (GPAGARAAGAPG) has biased composition (low complexity). Residues 73 to 93 (VVVMVLSVGFIASVFLLHIVA) traverse the membrane as a helical segment.

Belongs to the SEC61-beta family. In terms of assembly, heterotrimeric complex composed of SEC61, SBH1 and SSS1.

The protein localises to the endoplasmic reticulum membrane. In terms of biological role, necessary for protein translocation in the endoplasmic reticulum. This is Protein transport protein sec61 subunit beta (sbh1) from Schizosaccharomyces pombe (strain 972 / ATCC 24843) (Fission yeast).